Consider the following 1235-residue polypeptide: DNA polymerase catalytic subunit (1235 aa).

2 disordered regions span residues 640–691 (QGRF…ETAG) and 1098–1134 (AAAPGDEPAPPAALPSPAKRPRETPSPADPPGGASKP). Residues 650 to 661 (APKRPAAAREDE) show a composition bias toward basic and acidic residues. The span at 662–675 (ERPEEEGEDEDERE) shows a compositional bias: acidic residues. The segment covering 676–691 (EGGGEREPDGARETAG) has biased composition (basic and acidic residues).

This sequence belongs to the DNA polymerase type-B family. Forms a complex with the ssDNA-binding protein UL29, the DNA polymerase processivity factor, and the alkaline exonuclease. Interacts with the putative helicase-primase complex subunit UL8; this interaction may coordinate leading and lagging strand DNA synthesis at the replication fork.

Its subcellular location is the host nucleus. It carries out the reaction DNA(n) + a 2'-deoxyribonucleoside 5'-triphosphate = DNA(n+1) + diphosphate. The catalysed reaction is Endonucleolytic cleavage to 5'-phosphomonoester.. In terms of biological role, replicates viral genomic DNA. The replication complex is composed of six viral proteins: the DNA polymerase, processivity factor, primase, primase-associated factor, helicase, and ssDNA-binding protein. Additionally, the polymerase contains an intrinsic ribonuclease H (RNase H) activity that specifically degrades RNA/DNA heteroduplexes or duplex DNA substrates in the 5' to 3' direction. Therefore, it can catalyze the excision of the RNA primers that initiate the synthesis of Okazaki fragments at a replication fork during viral DNA replication. This Homo sapiens (Human) protein is DNA polymerase catalytic subunit.